The primary structure comprises 1286 residues: MRRLICKRICDYKSFDDEESVDGNRPSSAASAFKVPAPKTPGNPVSSARKPGSAGGPKVGGPSKEGGAGAVDEDDFIKAFTDVPSVQIYSSRELEETLNKIREILSDDKHDWDQRANALKKIRSLLVAGAAQYDCFFQHLRLLDGALKLSAKDLRSQVVREACITVAHLSTVLGNKFDHGAEAIVPTLFNLVPNSAKVMATSGCAAIRFIIRHTHVPRLIPLITSNCTSKSVPVRRRSFEFLDLLLQEWQTHSLERHAAVLVETIKKGIHDADAEARVEARKTYMGLRNHFPGEAETLYNSLEPSYQKSLQTYLKSSGSVASLPQSDRSSSSSQESLNRPFSSKWSTANPSTVAGRVSVGGSKANPLPGSLQRSRSDIDVNAAAGAKAHHAAGQAVRSGRLGAGALNPGSYASLEDTSDKMDGTASDDGRVRAKLSTPLVAVGNAKTDSRGRSRTKMVSQSQPGSRSGSPGRVLTTTALSTVSSGAQRVLVNSASAQKRSKIPRSQGCSREASPSRLSVARSSRIPRPSVSQGCSREASRESSRDTSPVRSFQPLGPGYGISQSSRLSSSVSAMRVLNTGSDVEEAVADALLLGDIRTKKKPARRRYESYGMHSDDDANSDASSACSERSYSSRNGSIPTYMRQTEDVAEVLNRCASSNWSERKEGLLGLQNLLKNQRTLSRIELKRLCEIFTRMFADPHGKVFSMFLETLVDFIQVHKDDLQDWLFVLLTQLLKKMGADLLGSVQAKVQKALDITRESFPNDLQFNILMRFTVDQTQTPSLKVKVAILKYIETLAKQMDPRDFTNSSETRLAVSRVITWTTEPKSSDVRKAAQSVLISLFELNTPEFTMLLGALPKTFQDGATKLLHNHLRNTGNGTQSSMGSPLTRPTPRSPANWSSPLTSPTNTSQNTLSPSAFDYDTENMNSEDIYSSLRGVTEAIQNFSFRSQEDMSEPVRRDPKKEDGDTICSGPGMSDPRAGGDAADGSQPALDNKASLLHSMPLHSSPRSRDYNPYNYSDSISPFNKSALKEAMFDDDADQFPDDLSLDHSDLVAELLKELSNHNERIEERKIALYELMKLTQEESFSVWDEHFKTILLLLLETLGDKEPTIRALALKVLKEILRHQPARFKNYAELTVMKTLEAHKDPHKEVVRSAEEAASVLATSISPEQCIKVLCPIIQTADYPINLAAIKMQTKVIERVSKETLNMLLPEIMPGLIQGYDNSESSVRKACVFCLVAVHAVIGDELKPHLSQLTGSKMKLLNLYIKRAQTGSAGADPTADVSGQS.

The segment at 1 to 40 is golgi localization; sequence MRRLICKRICDYKSFDDEESVDGNRPSSAASAFKVPAPKT. Phosphoserine is present on residues S14 and S20. The disordered stretch occupies residues 17–67; sequence DEESVDGNRPSSAASAFKVPAPKTPGNPVSSARKPGSAGGPKVGGPSKEGG. Positions 53–67 are enriched in gly residues; the sequence is SAGGPKVGGPSKEGG. The tract at residues 66-317 is TOG 1; sequence GGAGAVDEDD…KSLQTYLKSS (252 aa). HEAT repeat units follow at residues 179–214, 215–251, and 256–293; these read HGAE…IRHT, HVPR…EWQT, and RHAA…HFPG. The tract at residues 320-374 is disordered; it reads VASLPQSDRSSSSSQESLNRPFSSKWSTANPSTVAGRVSVGGSKANPLPGSLQRS. 3 positions are modified to phosphoserine: S322, S333, and S336. Over residues 322–340 the composition is skewed to low complexity; it reads SLPQSDRSSSSSQESLNRP. Over residues 341–352 the composition is skewed to polar residues; the sequence is FSSKWSTANPST. Residues S374, S376, and S413 each carry the phosphoserine modification. Residues 411–473 are disordered; that stretch reads YASLEDTSDK…GSRSGSPGRV (63 aa). Positions 417–431 are enriched in basic and acidic residues; sequence TSDKMDGTASDDGRV. An interaction with microtubules, MAPRE1 and MAPRE3 region spans residues 450–565; the sequence is RGRSRTKMVS…GPGYGISQSS (116 aa). The segment covering 459–473 has biased composition (low complexity); sequence SQSQPGSRSGSPGRV. A phosphoserine mark is found at S461, S465, S469, S484, and S495. Residues 493–564 form a disordered region; the sequence is SASAQKRSKI…LGPGYGISQS (72 aa). Positions 500–503 match the SXIP motif 1; mediates interaction with MAPRE1 and targeting to microtubule plus ends motif; sequence SKIP. S513 is modified (phosphoserine). The SXIP motif 2; mediates interaction with MAPRE1 and targeting to microtubule plus ends motif lies at 523–526; it reads SRIP. Residues S531, S535, S570, S572, S581, S614, and S620 each carry the phosphoserine modification. Over residues 605-616 the composition is skewed to basic and acidic residues; it reads RRYESYGMHSDD. The disordered stretch occupies residues 605 to 638; sequence RRYESYGMHSDDDANSDASSACSERSYSSRNGSI. A compositionally biased stretch (low complexity) spans 620-634; it reads SDASSACSERSYSSR. The segment at 642–873 is TOG 2; that stretch reads MRQTEDVAEV…TKLLHNHLRN (232 aa). HEAT repeat units lie at residues 702–739 and 764–801; these read KVFS…KMGA and LQFN…QMDP. A Phosphothreonine modification is found at T779. Residues 864–1286 form an interaction with RSN and localization to the Golgi and kinetochores region; sequence TKLLHNHLRN…DPTADVSGQS (423 aa). Disordered regions lie at residues 870–920 and 944–989; these read HLRN…FDYD and SFRS…SQPA. Composition is skewed to polar residues over residues 872–884 and 893–914; these read RNTG…SMGS and SPAN…TLSP. S884 bears the Phosphoserine mark. Phosphoserine is present on residues S944, S947, S1005, and S1021. A compositionally biased stretch (basic and acidic residues) spans 947-964; it reads SQEDMSEPVRRDPKKEDG. The tract at residues 1009-1286 is required for cortical localization; that stretch reads RDYNPYNYSD…DPTADVSGQS (278 aa). HEAT repeat units follow at residues 1046–1083, 1090–1127, and 1208–1245; these read LDHS…TQEE, EHFK…HQPA, and MLLP…VIGD.

Belongs to the CLASP family. Interacts with microtubules. Interacts with MAPRE1; probably required for targeting to growing microtubule plus ends. Interacts with ERC1, MAPRE3 and PHLDB2. The interaction with ERC1 may be mediated by PHLDB2. Interacts with GCC2; recruits CLASP2 to Golgi membranes. Interacts with CLIP2 and RSN. Interacts with MACF1. Interacts with mtcl2. Interacts with MTCL1. Phosphorylated by GSK3B. Phosphorylation by GSK3B may negatively regulate binding to microtubule lattices in lamella. Isoform 2 is phosphorylated on Ser-241. In terms of tissue distribution, highly expressed in brain and at low levels in heart, kidney and lung.

Its subcellular location is the cytoplasm. The protein localises to the cytoskeleton. The protein resides in the microtubule organizing center. It is found in the centrosome. It localises to the chromosome. Its subcellular location is the centromere. The protein localises to the kinetochore. The protein resides in the spindle. It is found in the spindle pole. It localises to the golgi apparatus. Its subcellular location is the trans-Golgi network. The protein localises to the cell membrane. The protein resides in the cell projection. It is found in the ruffle membrane. It localises to the cell cortex. In terms of biological role, microtubule plus-end tracking protein that promotes the stabilization of dynamic microtubules. Involved in the nucleation of noncentrosomal microtubules originating from the trans-Golgi network (TGN). Required for the polarization of the cytoplasmic microtubule arrays in migrating cells towards the leading edge of the cell. May act at the cell cortex to enhance the frequency of rescue of depolymerizing microtubules by attaching their plus-ends to cortical platforms composed of ERC1 and PHLDB2. This cortical microtubule stabilizing activity is regulated at least in part by phosphatidylinositol 3-kinase signaling. Also performs a similar stabilizing function at the kinetochore which is essential for the bipolar alignment of chromosomes on the mitotic spindle. Acts as a mediator of ERBB2-dependent stabilization of microtubules at the cell cortex. The chain is CLIP-associating protein 2 (Clasp2) from Mus musculus (Mouse).